The primary structure comprises 156 residues: Small ribosomal subunit protein uS7cz/uS7cy (156 aa).

It belongs to the universal ribosomal protein uS7 family. As to quaternary structure, part of the 30S ribosomal subunit.

The protein localises to the plastid. Its subcellular location is the chloroplast. Its function is as follows. One of the primary rRNA binding proteins, it binds directly to 16S rRNA where it nucleates assembly of the head domain of the 30S subunit. The protein is Small ribosomal subunit protein uS7cz/uS7cy (rps7-A) of Triticum aestivum (Wheat).